A 391-amino-acid polypeptide reads, in one-letter code: GTPase Obg (391 aa).

The region spanning 1–159 (MKFLDQAKIF…IWVWLRLKLI (159 aa)) is the Obg domain. An OBG-type G domain is found at 160 to 327 (ADAGLIGLPN…VLRVMATHVD (168 aa)). Residues 166-173 (GLPNAGKS), 191-195 (FTTLH), 212-215 (DIPG), 279-282 (SKID), and 308-310 (SAI) contribute to the GTP site. Residues serine 173 and threonine 193 each contribute to the Mg(2+) site. The interval 352-391 (TGIDHGYNRPSAVVDWEDAPFDDDDDDDGDESGDKGQWTR) is disordered. Over residues 366–382 (DWEDAPFDDDDDDDGDE) the composition is skewed to acidic residues.

This sequence belongs to the TRAFAC class OBG-HflX-like GTPase superfamily. OBG GTPase family. In terms of assembly, monomer. The cofactor is Mg(2+).

It is found in the cytoplasm. Its function is as follows. An essential GTPase which binds GTP, GDP and possibly (p)ppGpp with moderate affinity, with high nucleotide exchange rates and a fairly low GTP hydrolysis rate. Plays a role in control of the cell cycle, stress response, ribosome biogenesis and in those bacteria that undergo differentiation, in morphogenesis control. The sequence is that of GTPase Obg from Rhodospirillum rubrum (strain ATCC 11170 / ATH 1.1.1 / DSM 467 / LMG 4362 / NCIMB 8255 / S1).